Reading from the N-terminus, the 74-residue chain is Omega-filistatoxin-Kh1a (74 aa).

Post-translationally, contains 6 disulfide bonds. Expressed by the venom gland.

It localises to the secreted. Its function is as follows. Potently blocks vertebrate calcium channels Cav1 and Cav2. Is the most active on Cav2.2/CACNA1B (from HEK) (IC(50)=2.3 nM), followed by Cav2.1/CACNA1A (IC(50)=4.3 nM), Cav2.2/CACNA1B (from oocyte) (IC(50)=14.4 nM), Cav1.2/CACNA1C (IC(50)=26.8 nM), and Cav2.3/CACNA1E (IC(50)=96.4 nM). The polypeptide is Omega-filistatoxin-Kh1a (Kukulcania hibernalis (Southern house spider)).